Consider the following 1435-residue polypeptide: Dicer-like protein 2 (1435 aa).

A Helicase ATP-binding domain is found at 54-234 (MLSESLRQNI…LEVLEINLNA (181 aa)). An ATP-binding site is contributed by 67–74 (MDTGSGKT). The DEAH box signature appears at 175 to 178 (DEAH). The Helicase C-terminal domain occupies 400–564 (KLIDFLVLEH…ENKRALEHIQ (165 aa)). In terms of domain architecture, Dicer dsRNA-binding fold spans 591 to 684 (ARNHLSHFCG…MPAHHHIDDE (94 aa)). RNase III domains lie at 956-1099 (ANEL…IDGG) and 1141-1323 (LSEI…IDSQ). Mg(2+) contacts are provided by Glu-1178, Asp-1309, and Glu-1312.

Belongs to the helicase family. Dicer subfamily. Mg(2+) serves as cofactor. The cofactor is Mn(2+).

Dicer-like endonuclease involved in cleaving double-stranded RNA in the RNA interference (RNAi) pathway. Produces 21 to 25 bp dsRNAs (siRNAs) which target the selective destruction of homologous RNAs leading to sequence-specific suppression of gene expression, called post-transcriptional gene silencing (PTGS). Part of a broad host defense response against viral infection and transposons. The protein is Dicer-like protein 2 (DCL2) of Coccidioides immitis (strain RS) (Valley fever fungus).